The primary structure comprises 363 residues: MVVSFLKELLNFRSITPDDAGSLEFIAKFLPDFEAKFIEKNGTKNLILSKIYGDGEHLAFAGHVDVVPPGDGWDSEPFTPLEKDGYIYARGSQDMKSGVAAFVCAAKEAKFEGKLSLILTSDEEGDGTYGTPLALEYLREIRDLPKFCVVAEPTCDKKFGDSIKVGRRGSINGKIVIKGVQGHVAYPEKCINPVNLIAPLLSKIADHDMDGGSEFFSPSKIVVTDIRGGMQVCNVTPSELSIMFNVRNSNLTDVNDVESYLRSVLDGLSYELSIKQSSKRFLTNKDSKIVRNLMASVTKITGVTPLLNTKGGTSDARHFAEFGVDAIEFGVINDRIHAKNERVSISEVNKLYEVFKDLIENFY.

H63 provides a ligand contact to Zn(2+). D65 is a catalytic residue. Residue D94 coordinates Zn(2+). E123 functions as the Proton acceptor in the catalytic mechanism. 3 residues coordinate Zn(2+): E124, E152, and H337.

Belongs to the peptidase M20A family. DapE subfamily. In terms of assembly, homodimer. It depends on Zn(2+) as a cofactor. Co(2+) serves as cofactor.

It catalyses the reaction N-succinyl-(2S,6S)-2,6-diaminopimelate + H2O = (2S,6S)-2,6-diaminopimelate + succinate. It participates in amino-acid biosynthesis; L-lysine biosynthesis via DAP pathway; LL-2,6-diaminopimelate from (S)-tetrahydrodipicolinate (succinylase route): step 3/3. In terms of biological role, catalyzes the hydrolysis of N-succinyl-L,L-diaminopimelic acid (SDAP), forming succinate and LL-2,6-diaminopimelate (DAP), an intermediate involved in the bacterial biosynthesis of lysine and meso-diaminopimelic acid, an essential component of bacterial cell walls. The sequence is that of Succinyl-diaminopimelate desuccinylase from Campylobacter concisus (strain 13826).